The chain runs to 200 residues: 3-isopropylmalate dehydratase small subunit (200 aa).

It belongs to the LeuD family. LeuD type 1 subfamily. As to quaternary structure, heterodimer of LeuC and LeuD.

The catalysed reaction is (2R,3S)-3-isopropylmalate = (2S)-2-isopropylmalate. It functions in the pathway amino-acid biosynthesis; L-leucine biosynthesis; L-leucine from 3-methyl-2-oxobutanoate: step 2/4. Catalyzes the isomerization between 2-isopropylmalate and 3-isopropylmalate, via the formation of 2-isopropylmaleate. The polypeptide is 3-isopropylmalate dehydratase small subunit (Aliivibrio fischeri (strain ATCC 700601 / ES114) (Vibrio fischeri)).